The primary structure comprises 141 residues: HTH-type transcriptional regulator MntR (141 aa).

The 63-residue stretch at 1 to 63 (MPTPSMEDYI…YEKYRGLVLT (63 aa)) folds into the HTH dtxR-type domain. 6 residues coordinate Mn(2+): Asp8, Glu11, His77, Glu99, Glu102, and His103.

The protein belongs to the DtxR/MntR family. As to quaternary structure, homodimer.

It is found in the cytoplasm. DNA binding is strongly activated by Mn(2+). Functionally, central regulator of manganese homeostasis. In Geobacillus thermodenitrificans (strain NG80-2), this protein is HTH-type transcriptional regulator MntR.